Reading from the N-terminus, the 153-residue chain is Endoribonuclease YbeY (153 aa).

His-118, His-122, and His-128 together coordinate Zn(2+).

This sequence belongs to the endoribonuclease YbeY family. The cofactor is Zn(2+).

It localises to the cytoplasm. Single strand-specific metallo-endoribonuclease involved in late-stage 70S ribosome quality control and in maturation of the 3' terminus of the 16S rRNA. The chain is Endoribonuclease YbeY from Staphylococcus haemolyticus (strain JCSC1435).